The following is a 273-amino-acid chain: 2,3,4,5-tetrahydropyridine-2,6-dicarboxylate N-succinyltransferase (273 aa).

Positions 106 and 143 each coordinate substrate.

This sequence belongs to the transferase hexapeptide repeat family. As to quaternary structure, homotrimer.

It is found in the cytoplasm. It catalyses the reaction (S)-2,3,4,5-tetrahydrodipicolinate + succinyl-CoA + H2O = (S)-2-succinylamino-6-oxoheptanedioate + CoA. It functions in the pathway amino-acid biosynthesis; L-lysine biosynthesis via DAP pathway; LL-2,6-diaminopimelate from (S)-tetrahydrodipicolinate (succinylase route): step 1/3. This is 2,3,4,5-tetrahydropyridine-2,6-dicarboxylate N-succinyltransferase from Wolbachia pipientis wMel.